The following is a 189-amino-acid chain: GTP cyclohydrolase 1 (189 aa).

Residues Cys-79, His-82, and Cys-150 each coordinate Zn(2+).

It belongs to the GTP cyclohydrolase I family. Homomer.

It carries out the reaction GTP + H2O = 7,8-dihydroneopterin 3'-triphosphate + formate + H(+). It participates in cofactor biosynthesis; 7,8-dihydroneopterin triphosphate biosynthesis; 7,8-dihydroneopterin triphosphate from GTP: step 1/1. The polypeptide is GTP cyclohydrolase 1 (Rickettsia peacockii (strain Rustic)).